Here is a 119-residue protein sequence, read N- to C-terminus: C-C motif chemokine 24 (119 aa).

A signal peptide spans 1–26 (MAGSATIVAGLLLLVACACCIFPIDS). 2 cysteine pairs are disulfide-bonded: C33–C58 and C34–C74. N-linked (GlcNAc...) asparagine glycosylation is found at N54 and N115. Residues 96–119 (PSKGAKAVRTKFAVQRRRGNSTEV) form a disordered region. Residues 101 to 119 (KAVRTKFAVQRRRGNSTEV) are compositionally biased toward basic residues.

This sequence belongs to the intercrine beta (chemokine CC) family. Highest expression in jejunum and spleen. Lower levels found in liver and lung. No expression detected in kidney, thymus, brain or testis.

The protein resides in the secreted. Functionally, chemotactic for resting T-lymphocytes, and eosinophils. Has lower chemotactic activity for neutrophils but none for monocytes and activated lymphocytes. Is a strong suppressor of colony formation by a multipotential hematopoietic progenitor cell line. Binds to CCR3. In Mus musculus (Mouse), this protein is C-C motif chemokine 24.